We begin with the raw amino-acid sequence, 246 residues long: NAD(P)H-quinone oxidoreductase subunit K (246 aa).

[4Fe-4S] cluster is bound by residues Cys62, Cys63, Cys127, and Cys158.

The protein belongs to the complex I 20 kDa subunit family. As to quaternary structure, NDH-1 can be composed of about 15 different subunits; different subcomplexes with different compositions have been identified which probably have different functions. It depends on [4Fe-4S] cluster as a cofactor.

It is found in the cellular thylakoid membrane. It catalyses the reaction a plastoquinone + NADH + (n+1) H(+)(in) = a plastoquinol + NAD(+) + n H(+)(out). It carries out the reaction a plastoquinone + NADPH + (n+1) H(+)(in) = a plastoquinol + NADP(+) + n H(+)(out). In terms of biological role, NDH-1 shuttles electrons from an unknown electron donor, via FMN and iron-sulfur (Fe-S) centers, to quinones in the respiratory and/or the photosynthetic chain. The immediate electron acceptor for the enzyme in this species is believed to be plastoquinone. Couples the redox reaction to proton translocation, and thus conserves the redox energy in a proton gradient. Cyanobacterial NDH-1 also plays a role in inorganic carbon-concentration. This chain is NAD(P)H-quinone oxidoreductase subunit K, found in Parasynechococcus marenigrum (strain WH8102).